Reading from the N-terminus, the 158-residue chain is Large ribosomal subunit protein uL15 (158 aa).

Basic and acidic residues predominate over residues Met-1 to Thr-13. Positions Met-1 to Val-44 are disordered. The span at Arg-21–Val-35 shows a compositional bias: gly residues.

It belongs to the universal ribosomal protein uL15 family. Part of the 50S ribosomal subunit.

Functionally, binds to the 23S rRNA. The polypeptide is Large ribosomal subunit protein uL15 (Rhizobium etli (strain ATCC 51251 / DSM 11541 / JCM 21823 / NBRC 15573 / CFN 42)).